The primary structure comprises 349 residues: Carbamoyl phosphate synthase small chain (349 aa).

The CPSase stretch occupies residues 1 to 170 (MKAKLILENG…KYEISGEGKK (170 aa)). 3 residues coordinate L-glutamine: Ser45, Gly218, and Gly220. Positions 170–349 (KVAIIDFGIK…IFDEFMKYAL (180 aa)) constitute a Glutamine amidotransferase type-1 domain. Cys245 serves as the catalytic Nucleophile. 5 residues coordinate L-glutamine: Leu246, Gln249, Asn287, Gly289, and Tyr290. Active-site residues include His327 and Glu329.

It belongs to the CarA family. As to quaternary structure, composed of two chains; the small (or glutamine) chain promotes the hydrolysis of glutamine to ammonia, which is used by the large (or ammonia) chain to synthesize carbamoyl phosphate. Tetramer of heterodimers (alpha,beta)4.

The catalysed reaction is hydrogencarbonate + L-glutamine + 2 ATP + H2O = carbamoyl phosphate + L-glutamate + 2 ADP + phosphate + 2 H(+). It catalyses the reaction L-glutamine + H2O = L-glutamate + NH4(+). Its pathway is amino-acid biosynthesis; L-arginine biosynthesis; carbamoyl phosphate from bicarbonate: step 1/1. It functions in the pathway pyrimidine metabolism; UMP biosynthesis via de novo pathway; (S)-dihydroorotate from bicarbonate: step 1/3. Its function is as follows. Small subunit of the glutamine-dependent carbamoyl phosphate synthetase (CPSase). CPSase catalyzes the formation of carbamoyl phosphate from the ammonia moiety of glutamine, carbonate, and phosphate donated by ATP, constituting the first step of 2 biosynthetic pathways, one leading to arginine and/or urea and the other to pyrimidine nucleotides. The small subunit (glutamine amidotransferase) binds and cleaves glutamine to supply the large subunit with the substrate ammonia. This chain is Carbamoyl phosphate synthase small chain, found in Clostridium perfringens (strain 13 / Type A).